The following is a 218-amino-acid chain: uncharacterized protein (218 aa).

The ABC transporter domain occupies 2 to 216; it reads IEVLNLTKKI…ETSEKVIYKK (215 aa). 34-41 serves as a coordination point for ATP; the sequence is GSNGSGKT.

Belongs to the ABC transporter superfamily.

This is an uncharacterized protein from Bacillus subtilis (strain 168).